We begin with the raw amino-acid sequence, 255 residues long: uncharacterized protein (255 aa).

The N-terminal stretch at 1–22 is a signal peptide; the sequence is MNILSPIIIIIILIVLFYVMRM.

This is an uncharacterized protein from Acanthamoeba polyphaga (Amoeba).